A 213-amino-acid chain; its full sequence is Probable anti-sigma-F factor NrsF (213 aa).

The next 6 membrane-spanning stretches (helical) occupy residues 27–47, 51–71, 91–111, 126–146, 159–179, and 187–207; these read ALAI…LLQV, LGLA…TCLA, VPAA…FTLI, TWKS…AAVL, LAGF…YCLH, and FIGF…VLLG.

The protein belongs to the NrsF anti-sigma-F factor family.

The protein localises to the cell inner membrane. Probably an anti-sigma factor for extracytoplasmic function (ECF) sigma factor sigma-F (SigF), which responds to (hypo)chlorite. ECF sigma factors are held in an inactive form by a cognate anti-sigma factor. The protein is Probable anti-sigma-F factor NrsF of Azospira oryzae (strain ATCC BAA-33 / DSM 13638 / PS) (Dechlorosoma suillum).